The following is a 331-amino-acid chain: Ketol-acid reductoisomerase (NADP(+)) (331 aa).

The KARI N-terminal Rossmann domain occupies 2 to 182 (AQLFYDSDAD…GGTRAGILET (181 aa)). NADP(+) is bound by residues 25-28 (YGSQ), Ser51, Ser53, and 83-86 (DEFQ). The active site involves His108. NADP(+) is bound at residue Gly134. The region spanning 183–328 (NFKEETETDL…KGLRAMFSWL (146 aa)) is the KARI C-terminal knotted domain. Asp191, Glu195, Glu227, and Glu231 together coordinate Mg(2+). Residue Ser252 coordinates substrate.

The protein belongs to the ketol-acid reductoisomerase family. Requires Mg(2+) as cofactor.

The enzyme catalyses (2R)-2,3-dihydroxy-3-methylbutanoate + NADP(+) = (2S)-2-acetolactate + NADPH + H(+). It carries out the reaction (2R,3R)-2,3-dihydroxy-3-methylpentanoate + NADP(+) = (S)-2-ethyl-2-hydroxy-3-oxobutanoate + NADPH + H(+). Its pathway is amino-acid biosynthesis; L-isoleucine biosynthesis; L-isoleucine from 2-oxobutanoate: step 2/4. It participates in amino-acid biosynthesis; L-valine biosynthesis; L-valine from pyruvate: step 2/4. In terms of biological role, involved in the biosynthesis of branched-chain amino acids (BCAA). Catalyzes an alkyl-migration followed by a ketol-acid reduction of (S)-2-acetolactate (S2AL) to yield (R)-2,3-dihydroxy-isovalerate. In the isomerase reaction, S2AL is rearranged via a Mg-dependent methyl migration to produce 3-hydroxy-3-methyl-2-ketobutyrate (HMKB). In the reductase reaction, this 2-ketoacid undergoes a metal-dependent reduction by NADPH to yield (R)-2,3-dihydroxy-isovalerate. This is Ketol-acid reductoisomerase (NADP(+)) from Prochlorococcus marinus (strain MIT 9211).